We begin with the raw amino-acid sequence, 197 residues long: Imidazoleglycerol-phosphate dehydratase (197 aa).

It belongs to the imidazoleglycerol-phosphate dehydratase family.

It is found in the cytoplasm. It carries out the reaction D-erythro-1-(imidazol-4-yl)glycerol 3-phosphate = 3-(imidazol-4-yl)-2-oxopropyl phosphate + H2O. Its pathway is amino-acid biosynthesis; L-histidine biosynthesis; L-histidine from 5-phospho-alpha-D-ribose 1-diphosphate: step 6/9. The sequence is that of Imidazoleglycerol-phosphate dehydratase from Syntrophobacter fumaroxidans (strain DSM 10017 / MPOB).